A 603-amino-acid polypeptide reads, in one-letter code: Arginine--tRNA ligase (603 aa).

Residues 143–153 carry the 'HIGH' region motif; sequence PNIAKEMHVGH.

Belongs to the class-I aminoacyl-tRNA synthetase family. As to quaternary structure, monomer.

It localises to the cytoplasm. It carries out the reaction tRNA(Arg) + L-arginine + ATP = L-arginyl-tRNA(Arg) + AMP + diphosphate. The polypeptide is Arginine--tRNA ligase (Prochlorococcus marinus (strain MIT 9303)).